The chain runs to 299 residues: Pectin lyase (299 aa).

Residues 1 to 18 (MKFSTFVSLGLTAITALA) form the signal peptide. Low complexity-rich tracts occupy residues 82–91 (RSAATSPSSD) and 232–246 (SASA…TTRT). Disordered stretches follow at residues 82 to 105 (RSAA…PSPS) and 227 to 246 (SRGR…TTRT).

This sequence belongs to the polysaccharide lyase 1 family.

It is found in the secreted. It catalyses the reaction Eliminative cleavage of (1-&gt;4)-alpha-D-galacturonan methyl ester to give oligosaccharides with 4-deoxy-6-O-methyl-alpha-D-galact-4-enuronosyl groups at their non-reducing ends.. This chain is Pectin lyase (PELA), found in Peyronellaea pinodes (Pea foot rot fungus).